Reading from the N-terminus, the 804-residue chain is Phenylalanine--tRNA ligase beta subunit (804 aa).

One can recognise a tRNA-binding domain in the interval 39–155 (AEGLKKIVVG…ADVKPGEEVY (117 aa)). The region spanning 408-483 (RNPSVVKTTV…RIYGYDNLKS (76 aa)) is the B5 domain. The Mg(2+) site is built by aspartate 461, aspartate 467, glutamate 470, and glutamate 471. Residues 711–804 (PKFPAIERDL…LKESLKIKVR (94 aa)) form the FDX-ACB domain.

It belongs to the phenylalanyl-tRNA synthetase beta subunit family. Type 1 subfamily. Tetramer of two alpha and two beta subunits. Requires Mg(2+) as cofactor.

The protein localises to the cytoplasm. It catalyses the reaction tRNA(Phe) + L-phenylalanine + ATP = L-phenylalanyl-tRNA(Phe) + AMP + diphosphate + H(+). The chain is Phenylalanine--tRNA ligase beta subunit from Lactobacillus johnsonii (strain CNCM I-12250 / La1 / NCC 533).